The following is a 126-amino-acid chain: Holo-[acyl-carrier-protein] synthase (126 aa).

Asp9 and Glu58 together coordinate Mg(2+).

It belongs to the P-Pant transferase superfamily. AcpS family. Mg(2+) serves as cofactor.

The protein localises to the cytoplasm. The catalysed reaction is apo-[ACP] + CoA = holo-[ACP] + adenosine 3',5'-bisphosphate + H(+). In terms of biological role, transfers the 4'-phosphopantetheine moiety from coenzyme A to a Ser of acyl-carrier-protein. The polypeptide is Holo-[acyl-carrier-protein] synthase (Vibrio vulnificus (strain YJ016)).